The sequence spans 130 residues: Small ribosomal subunit protein uS9 (130 aa).

It belongs to the universal ribosomal protein uS9 family.

This chain is Small ribosomal subunit protein uS9, found in Stenotrophomonas maltophilia (strain R551-3).